A 273-amino-acid polypeptide reads, in one-letter code: MNNRVHQGHLARKRFGQNFLNDQFVIDSIVSAINPQKGQAMVEIGPGLAALTEPVGERLDKLTVIELDRDLAARLQTHPFLGPKLTIYQQDAMTFNFGELAEKMGQPLRVFGNLPYNISTPLMFHLFSYTDAIADMHFMLQKEVVNRLVAGPNSKAYGRLSVMAQYYCNVIPVLEVPPSAFTPPPKVDSAVVRLVPHATMPHPVKDVRVLSRITTEAFNQRRKTIRNSLGNLFSVEVLTGMGIDPAMRAENISVAQYCQMANYLAENAPLQES.

S-adenosyl-L-methionine is bound by residues asparagine 18, leucine 20, glycine 45, glutamate 66, aspartate 91, and asparagine 113.

It belongs to the class I-like SAM-binding methyltransferase superfamily. rRNA adenine N(6)-methyltransferase family. RsmA subfamily.

It localises to the cytoplasm. The enzyme catalyses adenosine(1518)/adenosine(1519) in 16S rRNA + 4 S-adenosyl-L-methionine = N(6)-dimethyladenosine(1518)/N(6)-dimethyladenosine(1519) in 16S rRNA + 4 S-adenosyl-L-homocysteine + 4 H(+). Specifically dimethylates two adjacent adenosines (A1518 and A1519) in the loop of a conserved hairpin near the 3'-end of 16S rRNA in the 30S particle. May play a critical role in biogenesis of 30S subunits. This chain is Ribosomal RNA small subunit methyltransferase A, found in Escherichia coli O139:H28 (strain E24377A / ETEC).